Consider the following 31-residue polypeptide: PTEN upstream open reading frame MP31 (31 aa).

Interacts with lactate dehydrogenases LDHA and LDHB; interaction with mitochondrial LDH leads to inhibition of lactate dehydrogenase activity, preventing conversion of lactate to pyruvate. As to expression, expressed in brain (at protein level). Expressed at lower levels in glioblastomas than in normal brain tissue (at protein level).

Its subcellular location is the mitochondrion. Functionally, inhibits lactate dehydrogenase (LDH)-mediated conversion of lactate to pyruvate in mitochondria by competing with mitochondrial LDH for binding to NAD(+). Also inhibits cellular lactate utilization. This chain is PTEN upstream open reading frame MP31, found in Homo sapiens (Human).